The chain runs to 255 residues: PHD finger protein ALFIN-LIKE 4 (255 aa).

An N-acetylmethionine modification is found at methionine 1. The tract at residues 145–200 (GKDKSSVSNNSSNRSKSSSKRGSESRAKFSKPEPKDDEEEEEEGVEEEDEDEQGET) is disordered. A compositionally biased stretch (low complexity) spans 150 to 160 (SVSNNSSNRSK). Positions 165–178 (RGSESRAKFSKPEP) are enriched in basic and acidic residues. A compositionally biased stretch (acidic residues) spans 179-198 (KDDEEEEEEGVEEEDEDEQG). The PHD-type zinc-finger motif lies at 199–251 (ETQCGACGESYAADEFWICCDLCEMWFHGKCVKITPARAEHIKQYKCPSCSNK).

Belongs to the Alfin family. Interacts with H3K4me3 and to a lesser extent with H3K4me2. As to expression, ubiquitously expressed.

The protein localises to the nucleus. In terms of biological role, histone-binding component that specifically recognizes H3 tails trimethylated on 'Lys-4' (H3K4me3), which mark transcription start sites of virtually all active genes. The chain is PHD finger protein ALFIN-LIKE 4 (AL4) from Arabidopsis thaliana (Mouse-ear cress).